The sequence spans 226 residues: ATP synthase F(0) complex subunit a (226 aa).

Methionine 1 bears the N-formylmethionine mark. Transmembrane regions (helical) follow at residues 9 to 29 (FITP…FPSL), 68 to 88 (WTLM…LGLL), 97 to 117 (QLSM…ITGF), 138 to 158 (IPML…ALAV), 164 to 184 (ITAG…LMSI), and 189 to 209 (ALIT…VAMI).

It belongs to the ATPase A chain family. As to quaternary structure, component of the ATP synthase complex composed at least of ATP5F1A/subunit alpha, ATP5F1B/subunit beta, ATP5MC1/subunit c (homooctomer), MT-ATP6/subunit a, MT-ATP8/subunit 8, ATP5ME/subunit e, ATP5MF/subunit f, ATP5MG/subunit g, ATP5MK/subunit k, ATP5MJ/subunit j, ATP5F1C/subunit gamma, ATP5F1D/subunit delta, ATP5F1E/subunit epsilon, ATP5PF/subunit F6, ATP5PB/subunit b, ATP5PD/subunit d, ATP5PO/subunit OSCP. ATP synthase complex consists of a soluble F(1) head domain (subunits alpha(3) and beta(3)) - the catalytic core - and a membrane F(0) domain - the membrane proton channel (subunits c, a, 8, e, f, g, k and j). These two domains are linked by a central stalk (subunits gamma, delta, and epsilon) rotating inside the F1 region and a stationary peripheral stalk (subunits F6, b, d, and OSCP). Interacts with DNAJC30; interaction is direct.

It localises to the mitochondrion inner membrane. It carries out the reaction H(+)(in) = H(+)(out). Functionally, subunit a, of the mitochondrial membrane ATP synthase complex (F(1)F(0) ATP synthase or Complex V) that produces ATP from ADP in the presence of a proton gradient across the membrane which is generated by electron transport complexes of the respiratory chain. ATP synthase complex consist of a soluble F(1) head domain - the catalytic core - and a membrane F(1) domain - the membrane proton channel. These two domains are linked by a central stalk rotating inside the F(1) region and a stationary peripheral stalk. During catalysis, ATP synthesis in the catalytic domain of F(1) is coupled via a rotary mechanism of the central stalk subunits to proton translocation. With the subunit c (ATP5MC1), forms the proton-conducting channel in the F(0) domain, that contains two crucial half-channels (inlet and outlet) that facilitate proton movement from the mitochondrial intermembrane space (IMS) into the matrix. Protons are taken up via the inlet half-channel and released through the outlet half-channel, following a Grotthuss mechanism. The polypeptide is ATP synthase F(0) complex subunit a (Bos taurus (Bovine)).